The sequence spans 1320 residues: Tetratricopeptide repeat protein 21A (1320 aa).

TPR repeat units lie at residues 4 to 38 (NDSSLMAGIIYYSQEKYFHHVQQAAAVGLEKFSND), 110 to 143 (GTALYYAGLFLWLIGRHDKAKEYIDRMLKISRGF), 146 to 180 (AYVLRGWVDLTSDKPHTAKKAIEYLEQGIQDTKDV), 181 to 213 (LGLMGKAMYFMMQQNYSEALEVVNQITVTSGSF), 215 to 247 (PALVLKMQLFLARQDWEQTVEMGHRILEKDESN), 334 to 367 (VHVATELGYLFILKNQVKEALLWYSEAMKLDKDG), 502 to 534 (IDPLYLMAQVRYYSELENAQSILQRCLELDPAS), 572 to 605 (PLYHLIKARALNKAGDYPEAIKTLKMVIKLPALK), 728 to 761 (PHTSLLLGDALMSILEPEKALEVYDEAYRQNPHD), 762 to 795 (ASLASRIGHAYVKAHQYTEAIEYYEAAQKINGQD), 797 to 828 (LCCDLGKLLLKLKKVNKAEKVLKQALEHDIVQ), 837 to 869 (VKCLLLLAKVYKSHKKEAVIETLNKALDLQSRI), 889 to 922 (ASICIQFAEHYLAEKEYDKAVQSYKDVFSYLPTD), 924 to 956 (KVMLELAQLYLLQGHLDLCEQHCAILLQTEQNH), 957 to 990 (ETASVLMADLMFRKQKHEAAINLYHQVLEKAPDN), 1028 to 1061 (PGFNYCRGIYCWHIGQPNEALKFLNKARKDSTWG), 1201 to 1234 (EKSWLLLADIYCQGSKFDLALELLRRCVQYNKSC), 1236 to 1268 (KAYEYMGFIMEKEQSYKDAVTNYKLAWKYSHHA), and 1270 to 1303 (PAIGFKLAFNYLKDKKFVEAIEICNDVLREHPDY).

Belongs to the TTC21 family. Interacts with IFT20. Interacts with IFT52. Interacts with IFT140. Interacts with CEP78; regulating IFT20 stability and localization. As to expression, strongly expressed in testis.

Its function is as follows. Intraflagellar transport (IFT)-associated protein required for spermatogenesis. Required for sperm flagellar formation and intraflagellar transport. The protein is Tetratricopeptide repeat protein 21A of Homo sapiens (Human).